We begin with the raw amino-acid sequence, 191 residues long: Putative manganese efflux pump MntP (191 aa).

Helical transmembrane passes span 3–23 (PISI…AAIG), 37–57 (LRAG…GWLL), 65–85 (VEAF…IHMI), 107–129 (WKLA…GLAF), 144–164 (CTLT…SMVG), and 169–189 (IIGG…HLHG).

This sequence belongs to the MntP (TC 9.B.29) family.

The protein localises to the cell inner membrane. In terms of biological role, probably functions as a manganese efflux pump. The chain is Putative manganese efflux pump MntP from Stenotrophomonas maltophilia (strain R551-3).